The sequence spans 612 residues: Actin-binding LIM protein 2 (612 aa).

LIM zinc-binding domains follow at residues 22 to 81 (ILCN…LYGT), 81 to 141 (TRCF…TLLG), 151 to 210 (RSCG…KFGI), and 210 to 270 (IRCD…ARTE). The Zn(2+) site is built by C83, C86, H103, C106, C109, C112, C131, and C134. C212, C215, H232, C235, C238, C241, H260, and C263 together coordinate Zn(2+). Basic and acidic residues predominate over residues 269–278 (TEDKSKETRT). Disordered regions lie at residues 269 to 295 (TEDK…SGSP) and 341 to 433 (AVGD…DNIY). A compositionally biased stretch (low complexity) spans 279-295 (SSESIVSVPASSTSGSP). 6 positions are modified to phosphoserine: S282, S294, G351, R356, S365, and S368. Over residues 364 to 373 (SSPSSAGSVS) the composition is skewed to low complexity. A compositionally biased stretch (polar residues) spans 394 to 416 (SGRSTPSLSVHSDSRPPSSTYQQ). S453 bears the Phosphoserine mark. The disordered stretch occupies residues 471–498 (ADTRTNSPDLDSQSLSLSSGTDQEPLQR). T473 bears the Phosphothreonine mark. Phosphoserine is present on residues S477 and S579. Positions 477 to 489 (SPDLDSQSLSLSS) are enriched in low complexity. In terms of domain architecture, HP spans 544–612 (TREYKIYPYD…NDLKKKALLF (69 aa)).

Interacts with F-actin and ABRA. As to expression, expressed in brain. Highly expressed in caudate/putamen, moderately expressed in the olfactory bulb. In the hippocampus, expressed in the CA1, CA2 and CA3 fields. In the cerebellum, expressed in Purkinje cells.

The protein localises to the cytoplasm. In terms of biological role, may act as scaffold protein. May stimulate ABRA activity and ABRA-dependent SRF transcriptional activity. The chain is Actin-binding LIM protein 2 (Ablim2) from Mus musculus (Mouse).